The sequence spans 509 residues: Histidine--tRNA ligase, cytoplasmic (509 aa).

At alanine 2 the chain carries N-acetylalanine. Residues glutamate 3 to proline 59 enclose the WHEP-TRS domain. Position 66 is a phosphoserine (serine 66). L-histidine-binding positions include aspartate 130–threonine 132, arginine 157, glutamine 173, aspartate 177, arginine 326, and tyrosine 330–tyrosine 331. A Phosphoserine modification is found at serine 356.

Belongs to the class-II aminoacyl-tRNA synthetase family. In terms of assembly, homodimer. In terms of tissue distribution, brain, heart, liver and kidney.

The protein localises to the cytoplasm. It catalyses the reaction tRNA(His) + L-histidine + ATP = L-histidyl-tRNA(His) + AMP + diphosphate + H(+). Its function is as follows. Catalyzes the ATP-dependent ligation of histidine to the 3'-end of its cognate tRNA, via the formation of an aminoacyl-adenylate intermediate (His-AMP). Plays a role in axon guidance. The polypeptide is Histidine--tRNA ligase, cytoplasmic (Homo sapiens (Human)).